The chain runs to 439 residues: O-fucosyltransferase 13 (439 aa).

The chain crosses the membrane as a helical; Signal-anchor for type II membrane protein span at residues 8 to 28 (PLFVFVLTFSLLLVVILLSPS). Residues N104 and N119 are each glycosylated (N-linked (GlcNAc...) asparagine). 238–240 (HLR) lines the substrate pocket. A glycan (N-linked (GlcNAc...) asparagine) is linked at N293.

This sequence belongs to the glycosyltransferase GT106 family.

It is found in the membrane. Its pathway is glycan metabolism. This chain is O-fucosyltransferase 13, found in Arabidopsis thaliana (Mouse-ear cress).